Here is a 450-residue protein sequence, read N- to C-terminus: UDP-N-acetylmuramoylalanine--D-glutamate ligase (450 aa).

Position 116-122 (116-122 (GSNGKTT)) interacts with ATP.

Belongs to the MurCDEF family.

Its subcellular location is the cytoplasm. The enzyme catalyses UDP-N-acetyl-alpha-D-muramoyl-L-alanine + D-glutamate + ATP = UDP-N-acetyl-alpha-D-muramoyl-L-alanyl-D-glutamate + ADP + phosphate + H(+). It participates in cell wall biogenesis; peptidoglycan biosynthesis. Cell wall formation. Catalyzes the addition of glutamate to the nucleotide precursor UDP-N-acetylmuramoyl-L-alanine (UMA). The chain is UDP-N-acetylmuramoylalanine--D-glutamate ligase from Dechloromonas aromatica (strain RCB).